Reading from the N-terminus, the 341-residue chain is Heme A synthase (341 aa).

8 helical membrane passes run 7-27, 92-112, 118-138, 159-179, 190-210, 253-273, 280-300, and 302-322; these read VTVW…IGGI, LFGR…AITK, MVAK…MGWF, LFLT…CAGV, FFTA…GALV, FLHR…PFWL, LFLA…VSVV, and IFLA…GVHM. Heme is bound at residue H255. Residue H308 coordinates heme.

The protein belongs to the COX15/CtaA family. Type 2 subfamily. In terms of assembly, interacts with CtaB. Heme b is required as a cofactor.

It is found in the cell membrane. It catalyses the reaction Fe(II)-heme o + 2 A + H2O = Fe(II)-heme a + 2 AH2. The protein operates within porphyrin-containing compound metabolism; heme A biosynthesis; heme A from heme O: step 1/1. Functionally, catalyzes the conversion of heme O to heme A by two successive hydroxylations of the methyl group at C8. The first hydroxylation forms heme I, the second hydroxylation results in an unstable dihydroxymethyl group, which spontaneously dehydrates, resulting in the formyl group of heme A. The polypeptide is Heme A synthase (Anaplasma marginale (strain St. Maries)).